A 329-amino-acid chain; its full sequence is Ribosomal RNA small subunit methyltransferase H (329 aa).

S-adenosyl-L-methionine-binding positions include 34 to 36 (GGH), D59, F86, D112, and Q119.

Belongs to the methyltransferase superfamily. RsmH family.

Its subcellular location is the cytoplasm. It catalyses the reaction cytidine(1402) in 16S rRNA + S-adenosyl-L-methionine = N(4)-methylcytidine(1402) in 16S rRNA + S-adenosyl-L-homocysteine + H(+). Its function is as follows. Specifically methylates the N4 position of cytidine in position 1402 (C1402) of 16S rRNA. The chain is Ribosomal RNA small subunit methyltransferase H from Chlorobium phaeobacteroides (strain DSM 266 / SMG 266 / 2430).